Reading from the N-terminus, the 305-residue chain is Uridylate cyclase (305 aa).

Mn(2+) is bound by residues D58 and D102.

This sequence belongs to the adenylyl cyclase class-4/guanylyl cyclase family. Pyrimidine cyclase subfamily. Homodimer. The cofactor is Mn(2+).

It is found in the cytoplasm. The catalysed reaction is GTP = 3',5'-cyclic GMP + diphosphate. It catalyses the reaction UTP = 3',5'-cyclic UMP + diphosphate. In terms of biological role, pycsar (pyrimidine cyclase system for antiphage resistance) provides immunity against bacteriophage. The pyrimidine cyclase (PycC) synthesizes cyclic nucleotides in response to infection; these serve as specific second messenger signals. The signals activate the adjacent effector, leading to bacterial cell death and abortive phage infection. A clade D Pycsar system. The pyrimidine cyclase gene of a two-gene Pycsar system, generates cyclic UMP (cUMP) from UTP as well as cGMP from GTP to a lesser extent, has little to no activity on ATP or CTP. Expression of this and adjacent effector MePycTM (AC A0A1C5G2D0) probably confers resistance to bacteriophage. The genes are probably only expressed in response to bacteriophage infection. This is Uridylate cyclase from Micromonospora echinofusca.